Reading from the N-terminus, the 469-residue chain is 1-aminocyclopropane-1-carboxylate synthase 3 (469 aa).

An N6-(pyridoxal phosphate)lysine modification is found at Lys-272. A disordered region spans residues 432 to 452 (APNATNHQNQQQSNANSKKKS). Over residues 437-447 (NHQNQQQSNAN) the composition is skewed to low complexity.

It belongs to the class-I pyridoxal-phosphate-dependent aminotransferase family. In terms of assembly, homodimer. Pyridoxal 5'-phosphate serves as cofactor.

It catalyses the reaction S-adenosyl-L-methionine = 1-aminocyclopropane-1-carboxylate + S-methyl-5'-thioadenosine + H(+). Its pathway is alkene biosynthesis; ethylene biosynthesis via S-adenosyl-L-methionine; ethylene from S-adenosyl-L-methionine: step 1/2. Its function is as follows. Catalyzes the formation of 1-aminocyclopropane-1-carboxylate, a direct precursor of ethylene in higher plants. In Solanum lycopersicum (Tomato), this protein is 1-aminocyclopropane-1-carboxylate synthase 3 (ACS3).